A 135-amino-acid chain; its full sequence is ATP synthase epsilon chain (135 aa).

It belongs to the ATPase epsilon chain family. As to quaternary structure, F-type ATPases have 2 components, CF(1) - the catalytic core - and CF(0) - the membrane proton channel. CF(1) has five subunits: alpha(3), beta(3), gamma(1), delta(1), epsilon(1). CF(0) has three main subunits: a, b and c.

It localises to the cellular thylakoid membrane. In terms of biological role, produces ATP from ADP in the presence of a proton gradient across the membrane. This chain is ATP synthase epsilon chain, found in Prochlorococcus marinus (strain NATL1A).